The following is a 234-amino-acid chain: MSTKSKAYKAAAELVDRSRLYRPIEAAKLAKETSSKNFDATVDVVFRLGVDPRKADQLVRGTVSLPHGTGKDVRVAVFAEGDNAEAAKAAGADIVGTEELIAAINEGNIDFDVAIATPDQMAKVGRVARVLGPRGLMPNPKTGTVTADVTKAVADVKGGKISFRVDKASNLHAIIGKASFDAEKLAENYGALYDEIIRLKPSSAKGIYAKKITISTTSGPGIPVDASVEKNYTD.

Belongs to the universal ribosomal protein uL1 family. Part of the 50S ribosomal subunit.

Its function is as follows. Binds directly to 23S rRNA. The L1 stalk is quite mobile in the ribosome, and is involved in E site tRNA release. Protein L1 is also a translational repressor protein, it controls the translation of the L11 operon by binding to its mRNA. The polypeptide is Large ribosomal subunit protein uL1 (Corynebacterium aurimucosum (strain ATCC 700975 / DSM 44827 / CIP 107346 / CN-1) (Corynebacterium nigricans)).